We begin with the raw amino-acid sequence, 335 residues long: Nucleoid-associated protein KPK_1538 (335 aa).

This sequence belongs to the YejK family.

It is found in the cytoplasm. It localises to the nucleoid. This Klebsiella pneumoniae (strain 342) protein is Nucleoid-associated protein KPK_1538.